The primary structure comprises 488 residues: Probable aldehyde dehydrogenase (488 aa).

240-245 (GSSVTG) contacts NAD(+). Active-site residues include E262 and C296.

Belongs to the aldehyde dehydrogenase family.

The catalysed reaction is an aldehyde + NAD(+) + H2O = a carboxylate + NADH + 2 H(+). Its function is as follows. Involved in an alpha-terpineol oxidation system. The chain is Probable aldehyde dehydrogenase (terPE) from Pseudomonas sp.